Reading from the N-terminus, the 61-residue chain is Beta-defensin 133 (61 aa).

The N-terminal stretch at 1-23 (MKIHVFLFVLFFFLVPIATRVKC) is a signal peptide. 2 disulfides stabilise this stretch: C31–C59 and C38–C52.

Belongs to the beta-defensin family.

The protein resides in the secreted. In terms of biological role, has antibacterial activity. This chain is Beta-defensin 133 (DEFB133), found in Homo sapiens (Human).